The chain runs to 91 residues: Large ribosomal subunit protein bL27 (91 aa).

The disordered stretch occupies residues 1–22 (MAHKKGQGSSRNGRDSNPQYRG). Residues 7-19 (QGSSRNGRDSNPQ) show a composition bias toward polar residues.

It belongs to the bacterial ribosomal protein bL27 family.

This chain is Large ribosomal subunit protein bL27, found in Myxococcus xanthus (strain DK1622).